The sequence spans 838 residues: Major vault protein (838 aa).

MVP repeat units follow at residues 13-52 (VHIL…VVPP), 53-114 (RFYC…FKLK), 118-170 (VNTG…HIIS), 171-223 (PNTA…ITLT), 224-278 (DTEA…IVLN), 280-328 (KEYC…NVVS), 329-380 (KDQA…IALD), and 381-433 (KNEG…CMSE).

As to quaternary structure, the vault ribonucleoprotein particle is a huge (400 A x 670 A) cage structure of 12.9 MDa. It consists of a dimer of half-vaults, with each half-vault comprising 39 identical major vault protein (MVP) chains, PARP4 and one or more vault RNAs (vRNAs).

The protein resides in the cytoplasm. It is found in the nucleus. Required for normal vault structure. Vaults are multi-subunit structures that may act as scaffolds for proteins involved in signal transduction. Vaults may also play a role in nucleo-cytoplasmic transport. The protein is Major vault protein of Trypanosoma cruzi (strain CL Brener).